Here is a 245-residue protein sequence, read N- to C-terminus: Ribonuclease PH (245 aa).

Phosphate contacts are provided by residues R87 and 125–127 (GTR).

Belongs to the RNase PH family. As to quaternary structure, homohexameric ring arranged as a trimer of dimers.

It catalyses the reaction tRNA(n+1) + phosphate = tRNA(n) + a ribonucleoside 5'-diphosphate. In terms of biological role, phosphorolytic 3'-5' exoribonuclease that plays an important role in tRNA 3'-end maturation. Removes nucleotide residues following the 3'-CCA terminus of tRNAs; can also add nucleotides to the ends of RNA molecules by using nucleoside diphosphates as substrates, but this may not be physiologically important. Probably plays a role in initiation of 16S rRNA degradation (leading to ribosome degradation) during starvation. This is Ribonuclease PH from Streptomyces griseus subsp. griseus (strain JCM 4626 / CBS 651.72 / NBRC 13350 / KCC S-0626 / ISP 5235).